Reading from the N-terminus, the 194-residue chain is ATP-dependent Clp protease proteolytic subunit (194 aa).

The Nucleophile role is filled by Ser-98. His-123 is a catalytic residue.

Belongs to the peptidase S14 family. As to quaternary structure, fourteen ClpP subunits assemble into 2 heptameric rings which stack back to back to give a disk-like structure with a central cavity, resembling the structure of eukaryotic proteasomes.

The protein resides in the cytoplasm. It catalyses the reaction Hydrolysis of proteins to small peptides in the presence of ATP and magnesium. alpha-casein is the usual test substrate. In the absence of ATP, only oligopeptides shorter than five residues are hydrolyzed (such as succinyl-Leu-Tyr-|-NHMec, and Leu-Tyr-Leu-|-Tyr-Trp, in which cleavage of the -Tyr-|-Leu- and -Tyr-|-Trp bonds also occurs).. Cleaves peptides in various proteins in a process that requires ATP hydrolysis. Has a chymotrypsin-like activity. Plays a major role in the degradation of misfolded proteins. This is ATP-dependent Clp protease proteolytic subunit from Acetivibrio thermocellus (strain ATCC 27405 / DSM 1237 / JCM 9322 / NBRC 103400 / NCIMB 10682 / NRRL B-4536 / VPI 7372) (Clostridium thermocellum).